Here is a 390-residue protein sequence, read N- to C-terminus: Guanine nucleotide-binding protein alpha-7 subunit (390 aa).

Low complexity-rich tracts occupy residues 1–12 (MSSTTTNTTTAT) and 22–42 (SSSPQSPSSSTSTLSPPMSPS). Residues 1–42 (MSSTTTNTTTATPAIQVNGNQSSSPQSPSSSTSTLSPPMSPS) form a disordered region. The G-alpha domain occupies 70-390 (SELKLLLLGT…TRQTMEEGGI (321 aa)). The tract at residues 73–86 (KLLLLGTGDSGKST) is G1 motif. GTP-binding positions include 78–85 (GTGDSGKS), 213–219 (LYTRVAS), 238–242 (DVAGQ), 307–310 (NKRD), and A363. Mg(2+) is bound at residue S85. The interval 211–219 (DILYTRVAS) is G2 motif. Positions 234-243 (FRMIDVAGQR) are G3 motif. The segment at 303–310 (ILFLNKRD) is G4 motif. The G5 motif stretch occupies residues 361 to 366 (TTATDT).

It belongs to the G-alpha family. As to quaternary structure, g proteins are composed of 3 units; alpha, beta and gamma. The alpha chain contains the guanine nucleotide binding site.

Its function is as follows. Guanine nucleotide-binding proteins (G proteins) are involved as modulators or transducers in various transmembrane signaling systems. This Dictyostelium discoideum (Social amoeba) protein is Guanine nucleotide-binding protein alpha-7 subunit (gpaG).